The primary structure comprises 183 residues: Caspase recruitment domain-containing protein 19 (183 aa).

C7 and C77 form a disulfide bridge. A CARD domain is found at 8-99; the sequence is DRLVQDTPFL…PLHSCLPSRH (92 aa). A helical transmembrane segment spans residues 122–142; sequence GPVAFLTCLGLAAGLALLIYC.

Associates with BCL10 by CARD-CARD interaction.

Its subcellular location is the endoplasmic reticulum membrane. The protein localises to the mitochondrion membrane. Its function is as follows. Plays a role in inhibiting the effects of BCL10-induced activation of NF-kappa-B. May inhibit the phosphorylation of BCL10 in a CARD-dependent manner. This Bos taurus (Bovine) protein is Caspase recruitment domain-containing protein 19 (CARD19).